The chain runs to 294 residues: 4-hydroxy-tetrahydrodipicolinate synthase (294 aa).

Thr45 contacts pyruvate. The active-site Proton donor/acceptor is Tyr133. Lys162 functions as the Schiff-base intermediate with substrate in the catalytic mechanism. Ile204 serves as a coordination point for pyruvate.

Belongs to the DapA family. Homotetramer; dimer of dimers.

The protein localises to the cytoplasm. It catalyses the reaction L-aspartate 4-semialdehyde + pyruvate = (2S,4S)-4-hydroxy-2,3,4,5-tetrahydrodipicolinate + H2O + H(+). The protein operates within amino-acid biosynthesis; L-lysine biosynthesis via DAP pathway; (S)-tetrahydrodipicolinate from L-aspartate: step 3/4. With respect to regulation, is allosterically regulated by the feedback inhibitor (S)-lysine. Its function is as follows. Catalyzes the condensation of (S)-aspartate-beta-semialdehyde [(S)-ASA] and pyruvate to 4-hydroxy-tetrahydrodipicolinate (HTPA). This is 4-hydroxy-tetrahydrodipicolinate synthase from Agrobacterium fabrum (strain C58 / ATCC 33970) (Agrobacterium tumefaciens (strain C58)).